A 78-amino-acid chain; its full sequence is Conotoxin CaFr179 (78 aa).

The signal sequence occupies residues 1-19; it reads MSGLGIMVLTLLLLVFMEA. Residues 20 to 44 constitute a propeptide that is removed on maturation; that stretch reads SHQDAGEKQATQRDAINVRRRRSLA. Disulfide bonds link Cys52–Cys64, Cys56–Cys72, and Cys63–Cys76. Phe77 bears the Phenylalanine amide mark.

It belongs to the conotoxin O3 superfamily. As to expression, expressed by the venom duct.

It localises to the secreted. The sequence is that of Conotoxin CaFr179 from Conus caracteristicus (Characteristic cone).